Consider the following 212-residue polypeptide: Probable NADH dehydrogenase [ubiquinone] iron-sulfur protein 8, mitochondrial (212 aa).

4Fe-4S ferredoxin-type domains follow at residues 104 to 133 and 143 to 172; these read RRYP…IEAE and TRYD…EGPN. [4Fe-4S] cluster contacts are provided by C113, C116, C119, C123, C152, C155, C158, and C162.

Belongs to the complex I 23 kDa subunit family. As to quaternary structure, complex I is composed of 45 different subunits This is a component of the iron-sulfur (IP) fragment of the enzyme. The cofactor is [4Fe-4S] cluster.

It is found in the mitochondrion. The catalysed reaction is a ubiquinone + NADH + 5 H(+)(in) = a ubiquinol + NAD(+) + 4 H(+)(out). Functionally, core subunit of the mitochondrial membrane respiratory chain NADH dehydrogenase (Complex I) that is believed to belong to the minimal assembly required for catalysis. Complex I functions in the transfer of electrons from NADH to the respiratory chain. The immediate electron acceptor for the enzyme is believed to be ubiquinone. The protein is Probable NADH dehydrogenase [ubiquinone] iron-sulfur protein 8, mitochondrial of Caenorhabditis elegans.